Reading from the N-terminus, the 49-residue chain is Large ribosomal subunit protein bL33 (49 aa).

It belongs to the bacterial ribosomal protein bL33 family.

This is Large ribosomal subunit protein bL33 from Pelotomaculum thermopropionicum (strain DSM 13744 / JCM 10971 / SI).